The following is a 106-amino-acid chain: Small ribosomal subunit protein uS10 (106 aa).

This sequence belongs to the universal ribosomal protein uS10 family. As to quaternary structure, part of the 30S ribosomal subunit.

Involved in the binding of tRNA to the ribosomes. The protein is Small ribosomal subunit protein uS10 of Mycoplasma genitalium (strain ATCC 33530 / DSM 19775 / NCTC 10195 / G37) (Mycoplasmoides genitalium).